The sequence spans 457 residues: MEGNLKNVLVLSFGFLLLFTAYGGLQSLQSSLYSEEGLGVAALSTLYGGMLLSSMFLPPVLIGKLGCKWTLVLAMCCYVAFSLGNFYASWYTLIPASVLVGLGAAALWSAQGTYLTIVGNMQARKTGQVGKDVVSQYFGIFFLIFQSSGVWGNLISSLVFGQMPTQGTIPEEQLQACGASDCLMATLSANSTNRPSQDLIYTLLGIYTGCGFLAVLLMAVFLEPVRDAQPEGEDEKQAPPFWSTLLSTFKLLRDKRLRLLILLPMLSGFEQAFLSGDYTRSYTTCALGIQFVGYVMICFGAADALCSVLFGRLARHTGRTVLFALGAVTQLACIIALLLWKPHPSQLPVFFVFPSLWGMADAVWQTQNNALFGVLFEKNKEAAFANYRLWEALGFVIAFGYSTFLCVSVKLYVLLGVLSAAMAAYGAVEYTESRKADGPLAAGRTKPAEDGATQTKL.

A run of 5 helical transmembrane segments spans residues 8–28 (VLVLSFGFLLLFTAYGGLQSL), 42–62 (ALSTLYGGMLLSSMFLPPVLI), 65–85 (LGCKWTLVLAMCCYVAFSLGN), 86–106 (FYASWYTLIPASVLVGLGAAA), and 140–160 (IFFLIFQSSGVWGNLISSLVF). The N-linked (GlcNAc...) asparagine glycan is linked to Asn-190. The next 6 membrane-spanning stretches (helical) occupy residues 202–222 (TLLGIYTGCGFLAVLLMAVFL), 257–277 (LRLLILLPMLSGFEQAFLSGD), 291–311 (FVGYVMICFGAADALCSVLFG), 320–340 (TVLFALGAVTQLACIIALLLW), 344–364 (PSQLPVFFVFPSLWGMADAVW), and 395–415 (FVIAFGYSTFLCVSVKLYVLL). Residues 438-457 (GPLAAGRTKPAEDGATQTKL) form a disordered region.

This sequence belongs to the unc-93 family.

It localises to the cell membrane. In Bos taurus (Bovine), this protein is Protein unc-93 homolog A (UNC93A).